The following is a 1185-amino-acid chain: Pyruvate carboxylase (1185 aa).

A Biotin carboxylation domain is found at 32-484 (KFTKVLVANR…WTTFIDDTPE (453 aa)). Lys-150, Glu-234, and His-269 together coordinate ATP. Positions 154–351 (RAIAIRCGVP…IVSAQLHVAA (198 aa)) constitute an ATP-grasp domain. Arg-326 is an active-site residue. The region spanning 570–838 (GLIMDTTWRD…QLEFDNNQLR (269 aa)) is the Pyruvate carboxyltransferase domain. Substrate is bound by residues 578-582 (RDAHQ) and Arg-651. Position 579 (Asp-579) interacts with a divalent metal cation. Residues Lys-747, His-777, and His-779 each coordinate a divalent metal cation. Residue Lys-747 is modified to N6-carboxylysine. Thr-912 is a binding site for substrate. The Biotinyl-binding domain occupies 1108-1183 (RADPGNPGHV…NGGDLCAVLE (76 aa)). At Lys-1149 the chain carries N6-biotinyllysine.

Requires biotin as cofactor. Zn(2+) serves as cofactor.

Its subcellular location is the cytoplasm. The enzyme catalyses hydrogencarbonate + pyruvate + ATP = oxaloacetate + ADP + phosphate + H(+). The protein operates within carbohydrate biosynthesis; gluconeogenesis. Its function is as follows. Pyruvate carboxylase catalyzes a 2-step reaction, involving the ATP-dependent carboxylation of the covalently attached biotin in the first step and the transfer of the carboxyl group to pyruvate in the second. This chain is Pyruvate carboxylase (pyr1), found in Schizosaccharomyces pombe (strain 972 / ATCC 24843) (Fission yeast).